The primary structure comprises 328 residues: Malate dehydrogenase (328 aa).

Position 16 to 22 (16 to 22 (GAAGQIS)) interacts with NAD(+). Residues Arg97 and Arg103 each contribute to the substrate site. NAD(+)-binding positions include Asn110, Gln117, and 134–136 (VGN). Positions 136 and 167 each coordinate substrate. Catalysis depends on His192, which acts as the Proton acceptor.

This sequence belongs to the LDH/MDH superfamily. MDH type 2 family. As to quaternary structure, homotetramer.

It catalyses the reaction (S)-malate + NAD(+) = oxaloacetate + NADH + H(+). With respect to regulation, citrate activates the enzyme in the oxidation of malate to oxaloacetate and inhibits it in the reverse reaction. Catalyzes the reversible oxidation of malate to oxaloacetate. Exhibits higher catalytic efficiency for oxaloacetate reduction than for malate oxidation in vitro. Almost equally active both for NADH and NADPH on the bases of the kcat values at pH 6.5, but catalytic efficiency for oxaloacetate reduction is 50-fold higher with NADH. This Corynebacterium glutamicum (strain ATCC 13032 / DSM 20300 / JCM 1318 / BCRC 11384 / CCUG 27702 / LMG 3730 / NBRC 12168 / NCIMB 10025 / NRRL B-2784 / 534) protein is Malate dehydrogenase.